We begin with the raw amino-acid sequence, 255 residues long: MSTNLHWQSFGQGPDLVLLHGWGMNGAVWQQTVESLQADFCVHVVDLPGYGFSAEHHGEDLAQIAAMVLKDAPEKAVWLGWSLGGLVATHIALNAPQRVSKLITVASSPKFAAEKPWRGIQPNVLSAFTSQLLEDFSLTIERFMALQAMGSPSARKDVKQLKQAVLSRPQPNPESLLVGLNILADVDLRDALISLTMPMLRLYGRLDGLVPIKVATDLSQQLPHTQQFVFSQSSHAPFMTEHDEFCAQVRDFAQD.

The AB hydrolase-1 domain maps to 16–241 (LVLLHGWGMN…QSSHAPFMTE (226 aa)). Residues Trp-22, 82–83 (SL), and 143–147 (FMALQ) contribute to the substrate site. Ser-82 acts as the Nucleophile in catalysis. Residues Asp-207 and His-235 contribute to the active site. His-235 provides a ligand contact to substrate.

Belongs to the AB hydrolase superfamily. Carboxylesterase BioH family. Monomer.

Its subcellular location is the cytoplasm. It carries out the reaction 6-carboxyhexanoyl-[ACP] methyl ester + H2O = 6-carboxyhexanoyl-[ACP] + methanol + H(+). Its pathway is cofactor biosynthesis; biotin biosynthesis. In terms of biological role, the physiological role of BioH is to remove the methyl group introduced by BioC when the pimeloyl moiety is complete. It allows to synthesize pimeloyl-ACP via the fatty acid synthetic pathway through the hydrolysis of the ester bonds of pimeloyl-ACP esters. This Vibrio parahaemolyticus serotype O3:K6 (strain RIMD 2210633) protein is Pimeloyl-[acyl-carrier protein] methyl ester esterase.